We begin with the raw amino-acid sequence, 630 residues long: Adagio-like protein 1 (630 aa).

Residues 1–36 (MEWDSESDGAGSIGAGEEEEEEEEEEEGGFGGGGGG) are disordered. The segment covering 16 to 28 (GEEEEEEEEEEEG) has biased composition (acidic residues). Residues 48-127 (IEGMLRASGP…SEIRKCIDNG (80 aa)) form the PAS domain. An S-4a-FMN cysteine modification is found at C95. Residues 216–262 (SSLFQLTDEVLCQSILSRLSPRDIASVSSVCRRLYLLTRNEDLWRMV) form the F-box domain. Kelch repeat units lie at residues 378-428 (LLVV…TLDG), 430-481 (KLVV…VYGG), 483-535 (KILM…AGPP), and 549-601 (RVLI…VVGG).

Belongs to the ADAGIO family. In terms of processing, FMN binds covalently to cysteine after exposure to blue light and is reversed in the dark.

It is found in the nucleus. The protein operates within protein modification; protein ubiquitination. In terms of biological role, component of an E3 ubiquitin ligase complex that plays a central role in blue light-dependent circadian cycles. Acts as a blue light photoreceptor, due to the presence of FMN, that mediates light-regulated protein degradation of critical clock components by targeting them to the proteasome complex. This is Adagio-like protein 1 from Oryza sativa subsp. japonica (Rice).